Consider the following 346-residue polypeptide: Ribosomal RNA small subunit methyltransferase H (346 aa).

S-adenosyl-L-methionine contacts are provided by residues 46–48 (GGY), Asp-63, Phe-90, Asp-113, and Gln-120. The disordered stretch occupies residues 270–327 (GGSAGSRHMPETHMRLPSFTPAVKGAVGPTPEEEERNPRARSAKLRAGIRTENSPLED).

It belongs to the methyltransferase superfamily. RsmH family.

It localises to the cytoplasm. It catalyses the reaction cytidine(1402) in 16S rRNA + S-adenosyl-L-methionine = N(4)-methylcytidine(1402) in 16S rRNA + S-adenosyl-L-homocysteine + H(+). In terms of biological role, specifically methylates the N4 position of cytidine in position 1402 (C1402) of 16S rRNA. The sequence is that of Ribosomal RNA small subunit methyltransferase H from Brucella ovis (strain ATCC 25840 / 63/290 / NCTC 10512).